We begin with the raw amino-acid sequence, 152 residues long: NADH-ubiquinone oxidoreductase chain 4 (152 aa).

Transmembrane regions (helical) follow at residues 2–22, 43–63, 84–104, and 128–148; these read FSGA…YFCL, ILLP…LALP, ITIV…LHMF, and MLMF…NIIL.

This sequence belongs to the complex I subunit 4 family.

Its subcellular location is the mitochondrion membrane. It catalyses the reaction a ubiquinone + NADH + 5 H(+)(in) = a ubiquinol + NAD(+) + 4 H(+)(out). Its function is as follows. Core subunit of the mitochondrial membrane respiratory chain NADH dehydrogenase (Complex I) that is believed to belong to the minimal assembly required for catalysis. Complex I functions in the transfer of electrons from NADH to the respiratory chain. The immediate electron acceptor for the enzyme is believed to be ubiquinone. The protein is NADH-ubiquinone oxidoreductase chain 4 (MT-ND4) of Macaca fascicularis (Crab-eating macaque).